A 657-amino-acid chain; its full sequence is Zinc transporter ZIP4 (657 aa).

The first 22 residues, Met1–Met22, serve as a signal peptide directing secretion. Topologically, residues Val23–Tyr335 are extracellular. N-linked (GlcNAc...) asparagine glycans are attached at residues Asn193, Asn220, and Asn268. A helical membrane pass occupies residues Leu336–Leu356. At Thr357–Ser374 the chain is on the cytoplasmic side. The helical transmembrane segment at Leu375–Leu395 threads the bilayer. Residues His396–Arg417 lie on the Extracellular side of the membrane. The helical transmembrane segment at Leu418 to Leu438 threads the bilayer. Over Leu439–Tyr508 the chain is Cytoplasmic. The Essential for SLC39A4 endocytosis signature appears at Leu462–Leu464. The segment at Ser467–Leu491 is disordered. The chain crosses the membrane as a helical span at residues Leu509–Ala528. Residues His517, Asn518, and Asp521 each coordinate Zn(2+). At Phe529–Gly536 the chain is on the extracellular side. A helical transmembrane segment spans residues Leu537–Leu563. 3 residues coordinate Zn(2+): His546, Glu547, and His550. The Cytoplasmic portion of the chain corresponds to Thr564–Ala568. The helical transmembrane segment at Leu569–Val589 threads the bilayer. At Gly590–Thr597 the chain is on the extracellular side. A helical membrane pass occupies residues Trp598–Ala618. The Cytoplasmic segment spans residues Met619–Pro627. The chain crosses the membrane as a helical span at residues Trp628–Leu648. Residues Ser649–Phe657 are Extracellular-facing.

This sequence belongs to the ZIP transporter (TC 2.A.5) family. Homodimer; homodimerization is mediated by the transmembrane domain. In terms of processing, the extracellular N-terminal ectodomain is cleaved when cells are Zn(2+) deficient, N-terminally cleaved SLC39A4 is internalized at a faster rate. Post-translationally, under excess Zn(2+) conditions, SLC39A4 on the cell surface is rapidly endocytosed, ubiquitinated and degraded. Glycosylated. In terms of tissue distribution, expressed in duodenum, jejunum, and ileum.

The protein resides in the cell membrane. Its subcellular location is the recycling endosome membrane. The protein localises to the apical cell membrane. It carries out the reaction Zn(2+)(in) = Zn(2+)(out). Functionally, selective transporter that mediates the uptake of Zn(2+). Plays an essential role for dietary zinc uptake from small intestine. The Zn(2+) uniporter activity is regulated by zinc availability. Also exhibits polyspecific binding and transport of Cu(2+), Cd(2+) and possibly Ni(2+) but at higher concentrations. This is Zinc transporter ZIP4 (Slc39a4) from Rattus norvegicus (Rat).